A 931-amino-acid chain; its full sequence is Envelope glycoprotein B (931 aa).

The N-terminal stretch at Met1–Ser71 is a signal peptide. At Val72–Pro786 the chain is on the virion surface side. 5 cysteine pairs are disulfide-bonded: Cys122–Cys584, Cys139–Cys540, Cys213–Cys277, Cys369–Cys417, and Cys608–Cys645. Residue Asn147 is glycosylated (N-linked (GlcNAc...) asparagine; by host). The involved in fusion and/or binding to host membrane stretch occupies residues Ala179–Tyr185. Asn257 carries N-linked (GlcNAc...) asparagine; by host glycosylation. Residues Gly264–Thr271 form an involved in fusion and/or binding to host membrane region. N-linked (GlcNAc...) asparagine; by host glycans are attached at residues Asn435, Asn503, Asn620, and Asn686. Hydrophobic membrane proximal region stretches follow at residues Ile731–Ser784 and Val764–Ser784. Residues Phe787–Tyr807 traverse the membrane as a helical segment. The Intravirion portion of the chain corresponds to Arg808 to Val931. The Golgi targeting signature appears at Tyr881–Leu884. The Internalization motif motif lies at Tyr920–Val923.

This sequence belongs to the herpesviridae glycoprotein B family. As to quaternary structure, homotrimer; disulfide-linked. Binds to heparan sulfate proteoglycans. Interacts with gH/gL heterodimer. A proteolytic cleavage by host furin generates two subunits that remain linked by disulfide bonds.

Its subcellular location is the virion membrane. The protein resides in the host cell membrane. It is found in the host endosome membrane. The protein localises to the host Golgi apparatus membrane. In terms of biological role, envelope glycoprotein that forms spikes at the surface of virion envelope. Essential for the initial attachment to heparan sulfate moieties of the host cell surface proteoglycans. Involved in fusion of viral and cellular membranes leading to virus entry into the host cell. Following initial binding to its host receptors, membrane fusion is mediated by the fusion machinery composed at least of gB and the heterodimer gH/gL. May be involved in the fusion between the virion envelope and the outer nuclear membrane during virion egress. This Varicella-zoster virus (strain Oka vaccine) (HHV-3) protein is Envelope glycoprotein B.